Consider the following 333-residue polypeptide: Anthranilate phosphoribosyltransferase (333 aa).

5-phospho-alpha-D-ribose 1-diphosphate is bound by residues Gly81, 84–85 (GN), Thr89, 91–94 (NIST), 109–117 (KHGNRSVSS), and Ala121. Gly81 contributes to the anthranilate binding site. Ser93 contacts Mg(2+). Asn112 provides a ligand contact to anthranilate. Arg167 contributes to the anthranilate binding site. Mg(2+)-binding residues include Asp225 and Glu226.

This sequence belongs to the anthranilate phosphoribosyltransferase family. Homodimer. It depends on Mg(2+) as a cofactor.

It catalyses the reaction N-(5-phospho-beta-D-ribosyl)anthranilate + diphosphate = 5-phospho-alpha-D-ribose 1-diphosphate + anthranilate. It functions in the pathway amino-acid biosynthesis; L-tryptophan biosynthesis; L-tryptophan from chorismate: step 2/5. In terms of biological role, catalyzes the transfer of the phosphoribosyl group of 5-phosphorylribose-1-pyrophosphate (PRPP) to anthranilate to yield N-(5'-phosphoribosyl)-anthranilate (PRA). This chain is Anthranilate phosphoribosyltransferase, found in Haemophilus influenzae (strain ATCC 51907 / DSM 11121 / KW20 / Rd).